The following is a 740-amino-acid chain: 1,4-alpha-glucan branching enzyme GlgB (740 aa).

Residue aspartate 419 is the Nucleophile of the active site. The active-site Proton donor is the glutamate 472.

This sequence belongs to the glycosyl hydrolase 13 family. GlgB subfamily. As to quaternary structure, monomer.

The enzyme catalyses Transfers a segment of a (1-&gt;4)-alpha-D-glucan chain to a primary hydroxy group in a similar glucan chain.. It functions in the pathway glycan biosynthesis; glycogen biosynthesis. Functionally, catalyzes the formation of the alpha-1,6-glucosidic linkages in glycogen by scission of a 1,4-alpha-linked oligosaccharide from growing alpha-1,4-glucan chains and the subsequent attachment of the oligosaccharide to the alpha-1,6 position. This Paramagnetospirillum magneticum (strain ATCC 700264 / AMB-1) (Magnetospirillum magneticum) protein is 1,4-alpha-glucan branching enzyme GlgB.